Reading from the N-terminus, the 208-residue chain is Large ribosomal subunit protein uL4 (208 aa).

A disordered region spans residues 45-78 (RQGTAKSKERSEMSGSTRKLGRQKGSGGARRGDI).

This sequence belongs to the universal ribosomal protein uL4 family. As to quaternary structure, part of the 50S ribosomal subunit.

One of the primary rRNA binding proteins, this protein initially binds near the 5'-end of the 23S rRNA. It is important during the early stages of 50S assembly. It makes multiple contacts with different domains of the 23S rRNA in the assembled 50S subunit and ribosome. In terms of biological role, forms part of the polypeptide exit tunnel. In Azobacteroides pseudotrichonymphae genomovar. CFP2, this protein is Large ribosomal subunit protein uL4.